Reading from the N-terminus, the 415-residue chain is Gamma-glutamyl phosphate reductase (415 aa).

This sequence belongs to the gamma-glutamyl phosphate reductase family.

It localises to the cytoplasm. It catalyses the reaction L-glutamate 5-semialdehyde + phosphate + NADP(+) = L-glutamyl 5-phosphate + NADPH + H(+). Its pathway is amino-acid biosynthesis; L-proline biosynthesis; L-glutamate 5-semialdehyde from L-glutamate: step 2/2. Catalyzes the NADPH-dependent reduction of L-glutamate 5-phosphate into L-glutamate 5-semialdehyde and phosphate. The product spontaneously undergoes cyclization to form 1-pyrroline-5-carboxylate. This is Gamma-glutamyl phosphate reductase from Clostridium perfringens (strain SM101 / Type A).